Consider the following 559-residue polypeptide: Oxygen-dependent choline dehydrogenase (559 aa).

4-33 (DYIIIGAGSAGNVLAARLTEESDVSVLLLE) lines the FAD pocket. Residues 182-202 (EGFGPMDRTVTPKGRRASTAR) are disordered. His-471 functions as the Proton acceptor in the catalytic mechanism.

The protein belongs to the GMC oxidoreductase family. Requires FAD as cofactor.

It catalyses the reaction choline + A = betaine aldehyde + AH2. It carries out the reaction betaine aldehyde + NAD(+) + H2O = glycine betaine + NADH + 2 H(+). Its pathway is amine and polyamine biosynthesis; betaine biosynthesis via choline pathway; betaine aldehyde from choline (cytochrome c reductase route): step 1/1. In terms of biological role, involved in the biosynthesis of the osmoprotectant glycine betaine. Catalyzes the oxidation of choline to betaine aldehyde and betaine aldehyde to glycine betaine at the same rate. The polypeptide is Oxygen-dependent choline dehydrogenase (Pectobacterium atrosepticum (strain SCRI 1043 / ATCC BAA-672) (Erwinia carotovora subsp. atroseptica)).